Reading from the N-terminus, the 185-residue chain is Ribosome-recycling factor (185 aa).

The protein belongs to the RRF family.

The protein localises to the cytoplasm. Responsible for the release of ribosomes from messenger RNA at the termination of protein biosynthesis. May increase the efficiency of translation by recycling ribosomes from one round of translation to another. The sequence is that of Ribosome-recycling factor from Serratia proteamaculans (strain 568).